The following is a 546-amino-acid chain: NADH-ubiquinone oxidoreductase chain 5 (546 aa).

The next 16 helical transmembrane spans lie at 1–21 (MFLLSVFFPLLGGLVNTSPIA), 31–51 (IIAIGCMVVAFISSVVIYYEV), 52–72 (VFMGCAVSVDVFGTWFSVGTF), 82–102 (LLTANMLFTVTGVSMAVHMYA), 112–132 (LNLFLGYLSYFTGFMCVLVAA), 135–155 (LLVMLVGWEGIGVCSYLLIGY), 175–195 (VSDGLLMWGVLWVWYHLGSLE), 198–218 (LLNVYSASGFVGLSILIGAMG), 237–257 (TPVSALIHAATLVTAGVYLLV), 264–284 (EMFVIIVGSLTAFMAGVFGAT), 291–310 (VIAYSTCSQLGYMMVSLGLG), 321–341 (LMTHASFKAALFLAAGMVISG), 358–378 (AMFTMLTLMVASLSLIGWPEL), 387–407 (ILNLAAICADPIADVAHTLLL), 440–460 (VLPILAMAILLLDIMLKVWVG), and 468–488 (LFFLPWGVKTLPFGLMVAGIL).

The protein belongs to the complex I subunit 5 family.

It localises to the mitochondrion inner membrane. It catalyses the reaction a ubiquinone + NADH + 5 H(+)(in) = a ubiquinol + NAD(+) + 4 H(+)(out). In terms of biological role, core subunit of the mitochondrial membrane respiratory chain NADH dehydrogenase (Complex I) that is believed to belong to the minimal assembly required for catalysis. Complex I functions in the transfer of electrons from NADH to the respiratory chain. The immediate electron acceptor for the enzyme is believed to be ubiquinone. This Chlamydomonas reinhardtii (Chlamydomonas smithii) protein is NADH-ubiquinone oxidoreductase chain 5 (ND5).